We begin with the raw amino-acid sequence, 232 residues long: Small ribosomal subunit protein uS2 (232 aa).

Belongs to the universal ribosomal protein uS2 family.

In Carboxydothermus hydrogenoformans (strain ATCC BAA-161 / DSM 6008 / Z-2901), this protein is Small ribosomal subunit protein uS2.